The sequence spans 688 residues: Lap-Emerin-Man domain protein 2 (688 aa).

2 disordered regions span residues 62–113 (LQKE…IDKP) and 202–227 (PQLRSPKISHRLQTSATSSPLQHKRP). Positions 82 to 92 (PKYLYPSSPSK) are enriched in low complexity. The span at 212-222 (RLQTSATSSPL) shows a compositional bias: polar residues. The next 2 helical transmembrane spans lie at 318 to 338 (YLVHIFMILLGVVAAIFLALL) and 547 to 567 (KVFLFGILALSGVIFKLINFF). Threonine 683 carries the post-translational modification Phosphothreonine. Residue serine 684 is modified to Phosphoserine.

It localises to the nucleus inner membrane. Nucleus inner membrane protein involved in meiosis. Plays a role in regulating nuclear envelope (NE) morphology and nuclear integrity, particularly during spindle pole body (SPB) extrusion or insertion through the NE, and perhaps during karyokinesis. In Schizosaccharomyces pombe (strain 972 / ATCC 24843) (Fission yeast), this protein is Lap-Emerin-Man domain protein 2 (lem2).